The following is a 305-amino-acid chain: Probable GTP 3',8-cyclase (305 aa).

Residues 6 to 233 (RHGRPVMSLR…MQDRKKYYID (228 aa)) enclose the Radical SAM core domain. Residue R15 coordinates GTP. 2 residues coordinate [4Fe-4S] cluster: C22 and C26. Y28 provides a ligand contact to S-adenosyl-L-methionine. C29 contacts [4Fe-4S] cluster. R62 is a binding site for GTP. Residue G66 coordinates S-adenosyl-L-methionine. Residue T92 coordinates GTP. S116 lines the S-adenosyl-L-methionine pocket. K153 is a binding site for GTP. [4Fe-4S] cluster contacts are provided by C249 and C252. 254-256 (RLR) is a GTP binding site. C266 contacts [4Fe-4S] cluster.

Belongs to the radical SAM superfamily. MoaA family. The cofactor is [4Fe-4S] cluster.

It catalyses the reaction GTP + AH2 + S-adenosyl-L-methionine = (8S)-3',8-cyclo-7,8-dihydroguanosine 5'-triphosphate + 5'-deoxyadenosine + L-methionine + A + H(+). It participates in cofactor biosynthesis; molybdopterin biosynthesis. Catalyzes the cyclization of GTP to (8S)-3',8-cyclo-7,8-dihydroguanosine 5'-triphosphate. The protein is Probable GTP 3',8-cyclase of Methanothermobacter thermautotrophicus (strain ATCC 29096 / DSM 1053 / JCM 10044 / NBRC 100330 / Delta H) (Methanobacterium thermoautotrophicum).